We begin with the raw amino-acid sequence, 393 residues long: Riboflavin biosynthesis protein RibBA (393 aa).

The segment at 1 to 200 (MQFDTIELAI…IKSLVAFRKA (200 aa)) is DHBP synthase. Residues 27–28 (RE), Asp-32, 139–143 (RNGHT), and Glu-163 contribute to the D-ribulose 5-phosphate site. Glu-28 serves as a coordination point for Mg(2+). His-142 contacts Mg(2+). The interval 201-393 (VELNVNLKAK…TKKNKMGHLI (193 aa)) is GTP cyclohydrolase II. 249-253 (RMHSA) serves as a coordination point for GTP. 3 residues coordinate Zn(2+): Cys-254, Cys-265, and Cys-267. GTP-binding positions include Gln-270, 291-293 (EGR), and Thr-313. Asp-325 serves as the catalytic Proton acceptor; for GTP cyclohydrolase activity. The Nucleophile; for GTP cyclohydrolase activity role is filled by Arg-327. GTP contacts are provided by Ser-348 and Lys-353.

The protein in the N-terminal section; belongs to the DHBP synthase family. It in the C-terminal section; belongs to the GTP cyclohydrolase II family. It depends on Mg(2+) as a cofactor. Mn(2+) is required as a cofactor. The cofactor is Zn(2+).

The enzyme catalyses D-ribulose 5-phosphate = (2S)-2-hydroxy-3-oxobutyl phosphate + formate + H(+). It catalyses the reaction GTP + 4 H2O = 2,5-diamino-6-hydroxy-4-(5-phosphoribosylamino)-pyrimidine + formate + 2 phosphate + 3 H(+). It functions in the pathway cofactor biosynthesis; riboflavin biosynthesis; 2-hydroxy-3-oxobutyl phosphate from D-ribulose 5-phosphate: step 1/1. It participates in cofactor biosynthesis; riboflavin biosynthesis; 5-amino-6-(D-ribitylamino)uracil from GTP: step 1/4. Its function is as follows. Catalyzes the conversion of D-ribulose 5-phosphate to formate and 3,4-dihydroxy-2-butanone 4-phosphate. In terms of biological role, catalyzes the conversion of GTP to 2,5-diamino-6-ribosylamino-4(3H)-pyrimidinone 5'-phosphate (DARP), formate and pyrophosphate. The sequence is that of Riboflavin biosynthesis protein RibBA from Staphylococcus epidermidis (strain ATCC 35984 / DSM 28319 / BCRC 17069 / CCUG 31568 / BM 3577 / RP62A).